Here is a 178-residue protein sequence, read N- to C-terminus: ATP synthase subunit delta (178 aa).

It belongs to the ATPase delta chain family. As to quaternary structure, F-type ATPases have 2 components, F(1) - the catalytic core - and F(0) - the membrane proton channel. F(1) has five subunits: alpha(3), beta(3), gamma(1), delta(1), epsilon(1). F(0) has three main subunits: a(1), b(2) and c(10-14). The alpha and beta chains form an alternating ring which encloses part of the gamma chain. F(1) is attached to F(0) by a central stalk formed by the gamma and epsilon chains, while a peripheral stalk is formed by the delta and b chains.

Its subcellular location is the cell membrane. Its function is as follows. F(1)F(0) ATP synthase produces ATP from ADP in the presence of a proton or sodium gradient. F-type ATPases consist of two structural domains, F(1) containing the extramembraneous catalytic core and F(0) containing the membrane proton channel, linked together by a central stalk and a peripheral stalk. During catalysis, ATP synthesis in the catalytic domain of F(1) is coupled via a rotary mechanism of the central stalk subunits to proton translocation. This protein is part of the stalk that links CF(0) to CF(1). It either transmits conformational changes from CF(0) to CF(1) or is implicated in proton conduction. The chain is ATP synthase subunit delta from Geobacillus stearothermophilus (Bacillus stearothermophilus).